Reading from the N-terminus, the 209-residue chain is MSNDSSKAKQNQVDEAVEGEIITDNENETVTGEASLMDELTQANFRVEELEQALEAATAKVDEQKDSVIRAAAEVDNIRRRAAIDVEKARKFALEKFANELLPVIDNMERALQGTDAEAEATKAVYEGVELTLKSFIGTVEKFGLTVVNPQGETFNPEHHQAIGMQPSPDFPANTVMMVMQKGYILNERLLRPAMVMVSQGGAAVDTQA.

Polar residues predominate over residues 1–13 (MSNDSSKAKQNQV). The disordered stretch occupies residues 1 to 27 (MSNDSSKAKQNQVDEAVEGEIITDNEN). The segment covering 15–27 (EAVEGEIITDNEN) has biased composition (acidic residues).

The protein belongs to the GrpE family. As to quaternary structure, homodimer.

The protein resides in the cytoplasm. Functionally, participates actively in the response to hyperosmotic and heat shock by preventing the aggregation of stress-denatured proteins, in association with DnaK and GrpE. It is the nucleotide exchange factor for DnaK and may function as a thermosensor. Unfolded proteins bind initially to DnaJ; upon interaction with the DnaJ-bound protein, DnaK hydrolyzes its bound ATP, resulting in the formation of a stable complex. GrpE releases ADP from DnaK; ATP binding to DnaK triggers the release of the substrate protein, thus completing the reaction cycle. Several rounds of ATP-dependent interactions between DnaJ, DnaK and GrpE are required for fully efficient folding. This Shewanella sediminis (strain HAW-EB3) protein is Protein GrpE.